Consider the following 669-residue polypeptide: Leucine zipper putative tumor suppressor 2 (669 aa).

The span at 1–25 (MAIVQTLPVPLEPAPEAATAPQAPV) shows a compositional bias: low complexity. Disordered stretches follow at residues 1–56 (MAIV…PTFF), 92–131 (NEDF…IPVS), 150–201 (PVLP…AADK), and 215–323 (GTLS…SDEA). The interval 1-332 (MAIVQTLPVP…ALLHCVLEGK (332 aa)) is required for centrosomal localization. Residues 172–181 (LSGSQGSLTQ) are compositionally biased toward polar residues. Low complexity predominate over residues 187-199 (ASSSSSSSSSSAA). The segment covering 215-233 (GTLSDSGRNSLSSLPTYST) has biased composition (polar residues). Low complexity-rich tracts occupy residues 241 to 251 (SSPGGHLPSHG) and 267 to 283 (GPSH…KSTG). Ser-249 bears the Phosphoserine mark. The segment covering 284-295 (SLGGRVAGGLLG) has biased composition (gly residues). Ser-296 carries the phosphoserine modification. Polar residues predominate over residues 298–308 (TRASPDSSSCG). Pro residues predominate over residues 311–320 (SPPPPPPPPS). A coiled-coil region spans residues 328–649 (VLEGKLRDRE…LELEARELAD (322 aa)). Residues 447–669 (SGEISLLKQQ…CLEEITATEI (223 aa)) form a sufficient for interaction with CTNNB1 region. Positions 450–669 (ISLLKQQLKE…CLEEITATEI (220 aa)) are sufficient for interaction with KATNB1 and for inhibition of katanin-mediated microtubule severing. At Ser-570 the chain carries Phosphoserine. Residues 631 to 640 (LEQELQQLSL) carry the Nuclear export signal motif.

The protein belongs to the LZTS2 family. In terms of assembly, interacts with KATNB1. Also interacts with CTNNB1, gamma-tubulin and KIF23. Highly expressed in prostate and testis, and at slightly lower levels in spleen, thymus, uterus, small intestine and colon.

Its subcellular location is the cytoplasm. It localises to the cytoskeleton. It is found in the microtubule organizing center. The protein resides in the centrosome. Negative regulator of katanin-mediated microtubule severing and release from the centrosome. Required for central spindle formation and the completion of cytokinesis. May negatively regulate axonal outgrowth by preventing the formation of microtubule bundles that are necessary for transport within the elongating axon. Negative regulator of the Wnt signaling pathway. Represses beta-catenin-mediated transcriptional activation by promoting the nuclear exclusion of beta-catenin. The chain is Leucine zipper putative tumor suppressor 2 from Homo sapiens (Human).